A 414-amino-acid polypeptide reads, in one-letter code: Serine/threonine transporter SstT (414 aa).

A run of 8 helical transmembrane segments spans residues 22–42 (GLVL…TIGF), 54–74 (IFVK…VMAA), 89–109 (IIVL…IAGF), 148–168 (AIFK…GLAL), 189–209 (IVHV…AETL), 223–243 (LLAV…PILV), 305–325 (MAGA…TLGL), and 337–357 (IVAA…LLLI).

Belongs to the dicarboxylate/amino acid:cation symporter (DAACS) (TC 2.A.23) family.

The protein localises to the cell inner membrane. The enzyme catalyses L-serine(in) + Na(+)(in) = L-serine(out) + Na(+)(out). It catalyses the reaction L-threonine(in) + Na(+)(in) = L-threonine(out) + Na(+)(out). In terms of biological role, involved in the import of serine and threonine into the cell, with the concomitant import of sodium (symport system). In Haemophilus influenzae (strain 86-028NP), this protein is Serine/threonine transporter SstT.